A 516-amino-acid chain; its full sequence is Endo-acting ulvan lyase (516 aa).

An N-terminal signal peptide occupies residues 1-24; that stretch reads MLEKTTLKNIILIHFLMFLAVVTA. C38 and C65 form a disulfide bridge. Residues G42, N44, D62, S64, A67, and N68 each contribute to the Ca(2+) site. Residue Y138 coordinates substrate. K143 acts as the Proton acceptor in catalysis. Residues 191–195 and 260–263 contribute to the substrate site; these read EGDGR and YRVK. The active-site Proton donor/acceptor is the Y260. The tract at residues 289–429 is ulvan-binding domain; that stretch reads PIGDVYKLKN…VWKAIAVESL (141 aa). The propeptide at 430 to 516 is removed by the type IX secretion system (T9SS); that stretch reads SVDENAILAS…NKYHKKLIVK (87 aa).

It belongs to the polysaccharide lyase 28 family. Requires Ca(2+) as cofactor.

Its subcellular location is the secreted. In terms of biological role, ulvan lyase involved in ulvan degradation. Ulvan is the main polysaccharide component of the Ulvales (green seaweed) cell wall. It is composed of disaccharide building blocks comprising 3-sulfated rhamnose (Rha3S) linked to D-glucuronic acid (GlcA), L-iduronic acid (IduA), or D-xylose (Xyl). Ulvan lyase catalyzes the endolytic cleavage of the glycosidic bond between Rha3S and the uronic acids GlcA or IduA, producing oligosaccharides that have unsaturated 4-deoxy-L-threo-hex-4-enopyranosiduronic acid (deltaUA) at the non-reducing end. This results eventually in the degradation of the ulvan polysaccharide into deltaUA-Rha3S disaccharides and deltaUA-Rha3S-Xyl-Rha3S tetrasaccharides. The protein is Endo-acting ulvan lyase of Formosa agariphila (strain DSM 15362 / KCTC 12365 / LMG 23005 / KMM 3901 / M-2Alg 35-1).